Here is a 451-residue protein sequence, read N- to C-terminus: Methylenetetrahydrofolate--tRNA-(uracil-5-)-methyltransferase TrmFO (451 aa).

An FAD-binding site is contributed by 18 to 23 (GGGLAG).

This sequence belongs to the MnmG family. TrmFO subfamily. Requires FAD as cofactor.

It is found in the cytoplasm. It carries out the reaction uridine(54) in tRNA + (6R)-5,10-methylene-5,6,7,8-tetrahydrofolate + NADH + H(+) = 5-methyluridine(54) in tRNA + (6S)-5,6,7,8-tetrahydrofolate + NAD(+). It catalyses the reaction uridine(54) in tRNA + (6R)-5,10-methylene-5,6,7,8-tetrahydrofolate + NADPH + H(+) = 5-methyluridine(54) in tRNA + (6S)-5,6,7,8-tetrahydrofolate + NADP(+). In terms of biological role, catalyzes the folate-dependent formation of 5-methyl-uridine at position 54 (M-5-U54) in all tRNAs. This is Methylenetetrahydrofolate--tRNA-(uracil-5-)-methyltransferase TrmFO from Synechococcus sp. (strain JA-3-3Ab) (Cyanobacteria bacterium Yellowstone A-Prime).